A 33-amino-acid polypeptide reads, in one-letter code: Photosystem II reaction center protein Psb30 (33 aa).

A helical transmembrane segment spans residues 8–28 (QLTALAFIVLSGPLVIALLAF).

It belongs to the Psb30/Ycf12 family. In terms of assembly, PSII is composed of 1 copy each of membrane proteins PsbA, PsbB, PsbC, PsbD, PsbE, PsbF, PsbH, PsbI, PsbJ, PsbK, PsbL, PsbM, PsbT, PsbX, PsbY, PsbZ, Psb30/Ycf12, peripheral proteins of the oxygen-evolving complex and a large number of cofactors. It forms dimeric complexes.

The protein localises to the plastid. The protein resides in the chloroplast thylakoid membrane. In terms of biological role, a core subunit of photosystem II (PSII), probably helps stabilize the reaction center. The polypeptide is Photosystem II reaction center protein Psb30 (Staurastrum punctulatum (Green alga)).